The primary structure comprises 522 residues: GMP synthase [glutamine-hydrolyzing] (522 aa).

Residues 9–204 (KILILDFGAQ…VVDICGCQTL (196 aa)) enclose the Glutamine amidotransferase type-1 domain. Cys86 (nucleophile) is an active-site residue. Active-site residues include His178 and Glu180. The GMPS ATP-PPase domain occupies 205–397 (WTAANIIEDQ…LGLPHAMVYR (193 aa)). ATP is bound at residue 232 to 238 (SGGVDSS).

In terms of assembly, homodimer.

It carries out the reaction XMP + L-glutamine + ATP + H2O = GMP + L-glutamate + AMP + diphosphate + 2 H(+). It participates in purine metabolism; GMP biosynthesis; GMP from XMP (L-Gln route): step 1/1. Its function is as follows. Catalyzes the synthesis of GMP from XMP. This is GMP synthase [glutamine-hydrolyzing] from Xylella fastidiosa (strain M12).